Reading from the N-terminus, the 200-residue chain is ATP-dependent Clp protease proteolytic subunit 2 (200 aa).

The Nucleophile role is filled by S99. H123 is an active-site residue.

This sequence belongs to the peptidase S14 family. As to quaternary structure, fourteen ClpP subunits assemble into 2 heptameric rings which stack back to back to give a disk-like structure with a central cavity, resembling the structure of eukaryotic proteasomes.

The protein localises to the cytoplasm. The catalysed reaction is Hydrolysis of proteins to small peptides in the presence of ATP and magnesium. alpha-casein is the usual test substrate. In the absence of ATP, only oligopeptides shorter than five residues are hydrolyzed (such as succinyl-Leu-Tyr-|-NHMec, and Leu-Tyr-Leu-|-Tyr-Trp, in which cleavage of the -Tyr-|-Leu- and -Tyr-|-Trp bonds also occurs).. In terms of biological role, cleaves peptides in various proteins in a process that requires ATP hydrolysis. Has a chymotrypsin-like activity. Plays a major role in the degradation of misfolded proteins. In Symbiobacterium thermophilum (strain DSM 24528 / JCM 14929 / IAM 14863 / T), this protein is ATP-dependent Clp protease proteolytic subunit 2.